Consider the following 284-residue polypeptide: MEMO1 family protein Mevan_0697 (284 aa).

It belongs to the MEMO1 family.

The polypeptide is MEMO1 family protein Mevan_0697 (Methanococcus vannielii (strain ATCC 35089 / DSM 1224 / JCM 13029 / OCM 148 / SB)).